A 287-amino-acid polypeptide reads, in one-letter code: uncharacterized protein (287 aa).

2 helical membrane passes run 12-32 (IILLFGMLVFLVLLGLGGAAL) and 217-237 (YTIGAITLVSVSGGVLAVLIV).

The protein localises to the cell membrane. This is an uncharacterized protein from Mycoplasma pneumoniae (strain ATCC 29342 / M129 / Subtype 1) (Mycoplasmoides pneumoniae).